Reading from the N-terminus, the 275-residue chain is Thiazole synthase (275 aa).

Lys108 acts as the Schiff-base intermediate with DXP in catalysis. 1-deoxy-D-xylulose 5-phosphate contacts are provided by residues Gly169, 196-197 (AG), and 218-219 (NT).

Belongs to the ThiG family. Homotetramer. Forms heterodimers with either ThiH or ThiS.

The protein resides in the cytoplasm. The enzyme catalyses [ThiS sulfur-carrier protein]-C-terminal-Gly-aminoethanethioate + 2-iminoacetate + 1-deoxy-D-xylulose 5-phosphate = [ThiS sulfur-carrier protein]-C-terminal Gly-Gly + 2-[(2R,5Z)-2-carboxy-4-methylthiazol-5(2H)-ylidene]ethyl phosphate + 2 H2O + H(+). It participates in cofactor biosynthesis; thiamine diphosphate biosynthesis. Functionally, catalyzes the rearrangement of 1-deoxy-D-xylulose 5-phosphate (DXP) to produce the thiazole phosphate moiety of thiamine. Sulfur is provided by the thiocarboxylate moiety of the carrier protein ThiS. In vitro, sulfur can be provided by H(2)S. The polypeptide is Thiazole synthase (Ralstonia pickettii (strain 12J)).